The chain runs to 103 residues: Large ribosomal subunit protein bL21 (103 aa).

It belongs to the bacterial ribosomal protein bL21 family. In terms of assembly, part of the 50S ribosomal subunit. Contacts protein L20.

Functionally, this protein binds to 23S rRNA in the presence of protein L20. In Sodalis glossinidius (strain morsitans), this protein is Large ribosomal subunit protein bL21.